The following is a 316-amino-acid chain: Aprataxin (316 aa).

The 38-residue stretch at 1-38 folds into the FHA-like domain; that stretch reads HASARGEGFLLLKADCNKGYVTVKQIGVNPTSVDLVDV. Positions 104–142 are disordered; that stretch reads KKMEVVDTQSSSADLRPSKSSVSPHEGTTSRKEHLGHWS. Residues 110–130 are compositionally biased toward polar residues; it reads DTQSSSADLRPSKSSVSPHEG. Residues 142 to 247 form the HIT domain; sequence SQGLKSSMQD…ISQDFDSPAL (106 aa). 2 interaction with DNA substrate regions span residues 167-171 and 229-230; these read DKYPK and SM. A Histidine triad motif motif is present at residues 232 to 236; that stretch reads QLHLH. Histidine 234 acts as the Tele-AMP-histidine intermediate in catalysis. Residues 291-313 form a C2H2-type zinc finger; the sequence is LRCHLCKQQLSTIPQLKEHLKKH.

It localises to the nucleus. The protein localises to the nucleoplasm. Its subcellular location is the nucleolus. The catalysed reaction is a 5'-end adenosine-5'-diphospho-5'-2'-deoxyribonucleoside-DNA + H2O = a 5'-end 5'-phospho-2'-deoxyribonucleoside-DNA + AMP + 2 H(+). The enzyme catalyses a 5'-end adenosine-5'-diphospho-5'-ribonucleoside-2'-deoxyribonucleotide-DNA + H2O = a 5'-end 5'-phospho-ribonucleoside-2'-deoxyribonucleotide-DNA + AMP + 2 H(+). It carries out the reaction a 3'-end 2'-deoxyribonucleotide-3'-diphospho-5'-guanosine-DNA + H2O = a 3'-end 2'-deoxyribonucleotide 3'-phosphate-DNA + GMP + 2 H(+). Functionally, DNA-binding protein involved in single-strand DNA break repair, double-strand DNA break repair and base excision repair. Resolves abortive DNA ligation intermediates formed either at base excision sites, or when DNA ligases attempt to repair non-ligatable breaks induced by reactive oxygen species. Catalyzes the release of adenylate groups covalently linked to 5'-phosphate termini, resulting in the production of 5'-phosphate termini that can be efficiently rejoined. Also able to hydrolyze adenosine 5'-monophosphoramidate (AMP-NH(2)) and diadenosine tetraphosphate (AppppA), but with lower catalytic activity. Likewise, catalyzes the release of 3'-linked guanosine (DNAppG) and inosine (DNAppI) from DNA, but has higher specific activity with 5'-linked adenosine (AppDNA). The polypeptide is Aprataxin (APTX) (Gallus gallus (Chicken)).